The sequence spans 134 residues: Cytochrome b (134 aa).

Helical transmembrane passes span 33–53 (FGSL…FLAM), 77–98 (WLLR…YLHV), and 113–133 (WNIG…GYVL). Heme b contacts are provided by H83 and H97.

Belongs to the cytochrome b family. The cytochrome bc1 complex contains 11 subunits: 3 respiratory subunits (MT-CYB, CYC1 and UQCRFS1), 2 core proteins (UQCRC1 and UQCRC2) and 6 low-molecular weight proteins (UQCRH/QCR6, UQCRB/QCR7, UQCRQ/QCR8, UQCR10/QCR9, UQCR11/QCR10 and a cleavage product of UQCRFS1). This cytochrome bc1 complex then forms a dimer. Heme b is required as a cofactor.

It localises to the mitochondrion inner membrane. Component of the ubiquinol-cytochrome c reductase complex (complex III or cytochrome b-c1 complex) that is part of the mitochondrial respiratory chain. The b-c1 complex mediates electron transfer from ubiquinol to cytochrome c. Contributes to the generation of a proton gradient across the mitochondrial membrane that is then used for ATP synthesis. This is Cytochrome b (MT-CYB) from Sturnira tildae (Tilda's yellow-shouldered bat).